We begin with the raw amino-acid sequence, 320 residues long: 3-oxoacyl-[acyl-carrier-protein] reductase 1, chloroplastic (320 aa).

A chloroplast-targeting transit peptide spans 1-60 (MATTVAATKLTSLKAVKKLGFREIRQVRQWSPLQSAMPHFGMLRCGSRQSFATSTVVKAQ). Residue 82 to 106 (VTGASRGIGKAIALSLGKAGCKVLV) coordinates NADP(+). S214 provides a ligand contact to substrate. The Proton acceptor role is filled by Y227.

It belongs to the short-chain dehydrogenases/reductases (SDR) family. In terms of assembly, homotetramer.

Its subcellular location is the plastid. It is found in the chloroplast. The enzyme catalyses a (3R)-hydroxyacyl-[ACP] + NADP(+) = a 3-oxoacyl-[ACP] + NADPH + H(+). Its pathway is lipid metabolism; fatty acid biosynthesis. The protein is 3-oxoacyl-[acyl-carrier-protein] reductase 1, chloroplastic (gbkr1) of Brassica napus (Rape).